The chain runs to 105 residues: MICOS complex subunit Mic10 (105 aa).

Residues 29–46 (LLKVTGGVAIGIVASVAF) traverse the membrane as a helical segment. The Mitochondrial intermembrane segment spans residues 47 to 105 (FKSRSWPIWFGSGVGLGTGWSNCRHDFASPYVLHGKRVPAGQDSQGKPAYNIITEQHKQ). A disordered region spans residues 85–105 (PAGQDSQGKPAYNIITEQHKQ).

It belongs to the MICOS complex subunit Mic10 family. As to quaternary structure, component of the mitochondrial contact site and cristae organizing system (MICOS) complex.

The protein localises to the mitochondrion inner membrane. Its function is as follows. Component of the MICOS complex, a large protein complex of the mitochondrial inner membrane that plays crucial roles in the maintenance of crista junctions, inner membrane architecture, and formation of contact sites to the outer membrane. This chain is MICOS complex subunit Mic10, found in Caenorhabditis elegans.